A 134-amino-acid chain; its full sequence is Phosphoribosyl-AMP cyclohydrolase (134 aa).

Position 80 (Asp-80) interacts with Mg(2+). Cys-81 contributes to the Zn(2+) binding site. Residues Asp-82 and Asp-84 each contribute to the Mg(2+) site. 2 residues coordinate Zn(2+): Cys-98 and Cys-105.

This sequence belongs to the PRA-CH family. Homodimer. Mg(2+) serves as cofactor. Requires Zn(2+) as cofactor.

It localises to the cytoplasm. It catalyses the reaction 1-(5-phospho-beta-D-ribosyl)-5'-AMP + H2O = 1-(5-phospho-beta-D-ribosyl)-5-[(5-phospho-beta-D-ribosylamino)methylideneamino]imidazole-4-carboxamide. The protein operates within amino-acid biosynthesis; L-histidine biosynthesis; L-histidine from 5-phospho-alpha-D-ribose 1-diphosphate: step 3/9. Functionally, catalyzes the hydrolysis of the adenine ring of phosphoribosyl-AMP. This chain is Phosphoribosyl-AMP cyclohydrolase, found in Bordetella avium (strain 197N).